Reading from the N-terminus, the 740-residue chain is Catalase-peroxidase 2 (740 aa).

Positions 1 to 27 are cleaved as a signal peptide; sequence MFKKTKPRISILALTISCAIYSGAALA. Residues 106–228 constitute a cross-link (tryptophyl-tyrosyl-methioninium (Trp-Tyr) (with M-254)); it reads WHSAGTYRIY…LAAVQMGLIY (123 aa). Residue histidine 107 is the Proton acceptor of the active site. The tryptophyl-tyrosyl-methioninium (Tyr-Met) (with W-106) cross-link spans 228 to 254; that stretch reads YVNPEGPNGVPDPLLAAKDIRDTFGRM. Histidine 269 serves as a coordination point for heme b.

This sequence belongs to the peroxidase family. Peroxidase/catalase subfamily. Homodimer or homotetramer. Requires heme b as cofactor. In terms of processing, formation of the three residue Trp-Tyr-Met cross-link is important for the catalase, but not the peroxidase activity of the enzyme.

The enzyme catalyses H2O2 + AH2 = A + 2 H2O. It catalyses the reaction 2 H2O2 = O2 + 2 H2O. Bifunctional enzyme with both catalase and broad-spectrum peroxidase activity. This Cellvibrio japonicus (strain Ueda107) (Pseudomonas fluorescens subsp. cellulosa) protein is Catalase-peroxidase 2.